The chain runs to 372 residues: Queuine tRNA-ribosyltransferase (372 aa).

Aspartate 90 (proton acceptor) is an active-site residue. Substrate contacts are provided by residues 90–94 (DSGGF), aspartate 144, glutamine 193, and glycine 220. Positions 251–257 (GVGTPED) are RNA binding. Aspartate 270 serves as the catalytic Nucleophile. An RNA binding; important for wobble base 34 recognition region spans residues 275-279 (TRNAR). The Zn(2+) site is built by cysteine 308, cysteine 310, cysteine 313, and histidine 339.

It belongs to the queuine tRNA-ribosyltransferase family. As to quaternary structure, homodimer. Within each dimer, one monomer is responsible for RNA recognition and catalysis, while the other monomer binds to the replacement base PreQ1. Requires Zn(2+) as cofactor.

It catalyses the reaction 7-aminomethyl-7-carbaguanine + guanosine(34) in tRNA = 7-aminomethyl-7-carbaguanosine(34) in tRNA + guanine. The protein operates within tRNA modification; tRNA-queuosine biosynthesis. Catalyzes the base-exchange of a guanine (G) residue with the queuine precursor 7-aminomethyl-7-deazaguanine (PreQ1) at position 34 (anticodon wobble position) in tRNAs with GU(N) anticodons (tRNA-Asp, -Asn, -His and -Tyr). Catalysis occurs through a double-displacement mechanism. The nucleophile active site attacks the C1' of nucleotide 34 to detach the guanine base from the RNA, forming a covalent enzyme-RNA intermediate. The proton acceptor active site deprotonates the incoming PreQ1, allowing a nucleophilic attack on the C1' of the ribose to form the product. After dissociation, two additional enzymatic reactions on the tRNA convert PreQ1 to queuine (Q), resulting in the hypermodified nucleoside queuosine (7-(((4,5-cis-dihydroxy-2-cyclopenten-1-yl)amino)methyl)-7-deazaguanosine). The chain is Queuine tRNA-ribosyltransferase from Campylobacter hominis (strain ATCC BAA-381 / DSM 21671 / CCUG 45161 / LMG 19568 / NCTC 13146 / CH001A).